The primary structure comprises 340 residues: Ava biosynthesis cluster protein G (340 aa).

Transmembrane regions (helical) follow at residues 15–35, 81–101, 118–138, and 148–168; these read WSAFWLWAIIGGYFAAFNIWN, FMISTDFITSACSVIALLQFV, AFFVMMGFGAPSGIMVAVHAF, and LSIMLTGVLTICFLATSFLCI. Asparagine 171 carries an N-linked (GlcNAc...) asparagine glycan. A run of 2 helical transmembrane segments spans residues 219–239 and 315–335; these read FSSVYLIIPEVMNWTLGYVAF and SALTAVCLLLRYVGLILWLQI.

The protein localises to the membrane. It functions in the pathway secondary metabolite biosynthesis. Its function is as follows. Part of the cluster that mediates the biosynthesis of a highly modified cyclo-arginine-tryptophan dipeptide (cRW). The first step of the pathway is perfornmed by the arginine-containing cyclodipeptide synthase (RCPDS) avaA that acts as the scaffold-generating enzyme and is responsible for formation of the cyclo-Arg-Trp (cRW) diketopiperazine. AvaB then acts as a multifunctional flavoenzyme that is responsible for generating the cyclo-Arg-formylkynurenine DKP, which can be deformylated by avaC. AvaB then further catalyzes an additional N-oxidation followed by cyclization and dehydration. The next step is an N-acetylation of the guanidine group catalyzed by the arginine N-acetyltransferase avaD. The roles of the additional enzymes identified within the ava cluster still have to be determined. This Aspergillus versicolor protein is Ava biosynthesis cluster protein G.